The chain runs to 526 residues: MVEYNVTSTTLEPKTGWPVVDRLLGGYTELETLNGQVVARCLVAIILCRFIAVWSYNLWFHPLARFPGPFLGRCSLLYRFIHSSRGRIHSAVADAHKKYGDIVRIAPNELSFASVESWKAIYGHPTRGNEIAPKGPFYEVFAAGFNSKCVGSERNPEKHALMRKMLNPAFSQRGLLEQEEIISGTIDKFVHVLGEKAGPGTKGLNMTKWYEMNSFDILGEMAFGESFHSLDTGIPHFWADVVLEHLYIITLLDNLRRIGWLAKLAGLLIPASLVTKNQNSNYSRQQVEKRLGIQKSRNDFVSLLVDKVRAGEVSKEEMTAHVSTITIAGGETVATTLSGLTCFLAQNPDKLERLTKEIRAAFKTFEEINAVKSQQIPYLQAVINEGLRLFPPASGGAPRVSPGFTLHDKYIPKGTEVNVSPWSITHNAKYFSDPWEFKPERWLDPNSKDIKDASRPFLLGPRDCLGRNFALMELNLVLAKLLWSYDMELVNKEINFLEQSTVHVLWWKPGLFVRWHKPQSPGFSPS.

N-linked (GlcNAc...) asparagine glycosylation is present at asparagine 5. Residues 41-61 (CLVAIILCRFIAVWSYNLWFH) traverse the membrane as a helical segment. Asparagine 205 and asparagine 281 each carry an N-linked (GlcNAc...) asparagine glycan. Cysteine 464 is a heme binding site.

It belongs to the cytochrome P450 family. The cofactor is heme.

Its subcellular location is the membrane. Its pathway is secondary metabolite biosynthesis. Its function is as follows. Cytochrome P450 monooxygenase; part of the gene cluster that mediates the biosynthesis of botrydial. Botrydial is necessary for colonization of plant tissue by the T4 strain. It is a strain-dependent virulence factor since highly aggressive strains like SAS56 or B05 still retain substantial virulence when botrydial synthesis is impaired, since they produce also botcinic acid. The first step of botrydial biosynthesis is performed by the sesquiterpene synthase BOT2 which catalyzes the cyclization of farnesyl diphosphate (FPP) to presilphiperfolan-8-beta-ol (PSP). The cytochrome P450 monooxygenase BOT4 then catalyzes the hydroxylation at C-4 to give a probotryane intermediate. Acetylation of the hydroxyl at C-4 is carried out by the acetyltransferase BOT5, followed by the combined action of the P450 monooxygenases BOT3 and BOT1, to yield finally the glycol, via the regio- and stereospecific hydroxylations at C-10 and C-15 of the probotryane intermediates, respectively. The cleavage of the C10-C15 bond of probotryane skeleton is an intriguing and chemically important reaction, which could be mediated by some of the monooxygenases or by a combination of them. It is possible that either BOT3 or BOT1 would oxidize either the 10- or the 15-hydroxy group to the hydroperoxide derivative, which would then undergo heterolytic fragmentation to give the dialdehyde botrydial. Finally, the dehydrogenase BOT7 might be involved in the conversion of botrydial to dihydrobotrydial. The polypeptide is Cytochrome P450 monooxygenase BOT4 (Botryotinia fuckeliana (Noble rot fungus)).